The chain runs to 108 residues: Nucleoid-associated protein CHAB381_0200 (108 aa).

The protein belongs to the YbaB/EbfC family. In terms of assembly, homodimer.

It localises to the cytoplasm. Its subcellular location is the nucleoid. Its function is as follows. Binds to DNA and alters its conformation. May be involved in regulation of gene expression, nucleoid organization and DNA protection. The sequence is that of Nucleoid-associated protein CHAB381_0200 from Campylobacter hominis (strain ATCC BAA-381 / DSM 21671 / CCUG 45161 / LMG 19568 / NCTC 13146 / CH001A).